Consider the following 636-residue polypeptide: Biosynthetic arginine decarboxylase (636 aa).

Lys101 carries the post-translational modification N6-(pyridoxal phosphate)lysine. 286–296 (FDVGGGLAVDY) contacts substrate.

Belongs to the Orn/Lys/Arg decarboxylase class-II family. SpeA subfamily. Mg(2+) is required as a cofactor. Pyridoxal 5'-phosphate serves as cofactor.

The catalysed reaction is L-arginine + H(+) = agmatine + CO2. It participates in amine and polyamine biosynthesis; agmatine biosynthesis; agmatine from L-arginine: step 1/1. In terms of biological role, catalyzes the biosynthesis of agmatine from arginine. In Shewanella denitrificans (strain OS217 / ATCC BAA-1090 / DSM 15013), this protein is Biosynthetic arginine decarboxylase.